Consider the following 488-residue polypeptide: Calcium uniporter protein, mitochondrial (488 aa).

The N-terminal 74 residues, 1–74 (MRALVSRTPI…RSFQLSASSR (74 aa)), are a transit peptide targeting the mitochondrion. Residues 65-117 (RSFQLSASSRDKRGPQSAEPDPLERLEVKKVQQQHENEKDDSGRDTKSGGKVA) form a disordered region. Over 75–339 (DKRGPQSAEP…ECDALAHRGA (265 aa)) the chain is Mitochondrial matrix. Residues 86–112 (PLERLEVKKVQQQHENEKDDSGRDTKS) are compositionally biased toward basic and acidic residues. Residues 340–361 (QRVALGGFGILAFWWYIVYKLT) form a helical membrane-spanning segment. Residues 362 to 370 (FETDLGWDT) are Mitochondrial intermembrane-facing. Positions 368–376 (WDTMEPVTY) match the Selectivity filter motif. A helical transmembrane segment spans residues 371-391 (MEPVTYLVSLSTLMGGYLWFL). Glu-372 lines the Ca(2+) pocket. At 392–488 (YHNREISYRS…ERPKDDRDDD (97 aa)) the chain is on the mitochondrial matrix side. Positions 464–488 (ALKKERRLKNGSQKEERPKDDRDDD) are disordered. The segment covering 475-488 (SQKEERPKDDRDDD) has biased composition (basic and acidic residues).

Belongs to the MCU (TC 1.A.77) family. In terms of assembly, homotetramer, assembles in a dimer or dimers configuration with two interfaces.

It localises to the mitochondrion inner membrane. It catalyses the reaction Ca(2+)(in) = Ca(2+)(out). With respect to regulation, inhibited by ruthenium red or its derivative Ru360. Its function is as follows. Highly selective calcium channel localized to the inner mitochondrial membrane, which mediates calcium uptake into the mitochondrial matrix. Mitochondrial calcium homeostasis plays key roles in cellular physiology and regulates ATP production, cytoplasmic calcium signals and activation of cell death pathways. Sufficient to operate as a pore-forming channel without the need of calcium-sensor or auxiliary subunit. This is Calcium uniporter protein, mitochondrial from Neosartorya fischeri (strain ATCC 1020 / DSM 3700 / CBS 544.65 / FGSC A1164 / JCM 1740 / NRRL 181 / WB 181) (Aspergillus fischerianus).